A 523-amino-acid polypeptide reads, in one-letter code: Sensory neuron membrane protein 1 (523 aa).

Topologically, residues 1–10 are cytoplasmic; that stretch reads MRLARGIKYA. A helical transmembrane segment spans residues 11–31; it reads VIGAGVALFGVLFGWVMFPAI. Residues 32-458 lie on the Extracellular side of the membrane; sequence LKSQLKKEMA…NQLFIPKRIV (427 aa). N-linked (GlcNAc...) asparagine glycans are attached at residues Asn67 and Asn229. Cystine bridges form between Cys268/Cys333, Cys297/Cys352, and Cys335/Cys341. Asn440 carries N-linked (GlcNAc...) asparagine glycosylation. A helical membrane pass occupies residues 459 to 479; that stretch reads SVIRWWLLSFGMLAALGGVIF. Topologically, residues 480–523 are cytoplasmic; that stretch reads HFKDDIMRIAIKGDSSVTKVNPEDGEQKDVSVIGQSHEPPKINM. The disordered stretch occupies residues 499–523; it reads VNPEDGEQKDVSVIGQSHEPPKINM.

The protein belongs to the CD36 family. Localizes to both male and female antennae but not the leg, wing, gut, head, or thoracic ganglia. Detected throughout the sensory epithelium, associating with both sex-pheromone sensilla and plant-volatile sensilla. Differentially expressed both among different sensilla and different neurons within a given sensillum. Expression coincides with that of several other olfactory-specific proteins that are involved in odor detection.

The protein localises to the cell membrane. Plays an olfactory role that is not restricted to pheromone sensitivity. The polypeptide is Sensory neuron membrane protein 1 (Manduca sexta (Tobacco hawkmoth)).